We begin with the raw amino-acid sequence, 312 residues long: Glycerol-3-phosphate dehydrogenase [NAD(P)+] (312 aa).

NADPH-binding residues include tryptophan 11, arginine 30, arginine 31, and lysine 95. Lysine 95, glycine 123, and serine 125 together coordinate sn-glycerol 3-phosphate. An NADPH-binding site is contributed by alanine 127. Positions 177, 230, 240, 241, and 242 each coordinate sn-glycerol 3-phosphate. Lysine 177 serves as the catalytic Proton acceptor. Residue arginine 241 coordinates NADPH. NADPH is bound by residues valine 265 and glutamate 267.

This sequence belongs to the NAD-dependent glycerol-3-phosphate dehydrogenase family.

The protein localises to the cytoplasm. The catalysed reaction is sn-glycerol 3-phosphate + NAD(+) = dihydroxyacetone phosphate + NADH + H(+). It carries out the reaction sn-glycerol 3-phosphate + NADP(+) = dihydroxyacetone phosphate + NADPH + H(+). It participates in membrane lipid metabolism; glycerophospholipid metabolism. Catalyzes the reduction of the glycolytic intermediate dihydroxyacetone phosphate (DHAP) to sn-glycerol 3-phosphate (G3P), the key precursor for phospholipid synthesis. This is Glycerol-3-phosphate dehydrogenase [NAD(P)+] from Helicobacter pylori (strain Shi470).